Here is a 1550-residue protein sequence, read N- to C-terminus: Cellulose synthase 1 (1550 aa).

Residues 1–741 (MPEVRSSTQS…KERVLKGTVK (741 aa)) are catalytic. Helical transmembrane passes span 26–46 (GAGL…TSVT), 47–67 (LPPE…FIVG), and 106–126 (GLLG…LFLS). Positions 147–240 (EWPTVDIFVP…YILIFDCDHV (94 aa)) are catalytic subdomain A. Asp-189 is an active-site residue. Asp-236 and Asp-238 together coordinate substrate. Residues 317–377 (TAIEQIGGFA…GQRVRWARGM (61 aa)) form a catalytic subdomain B region. Asp-333 is a catalytic residue. A run of 5 helical transmembrane segments spans residues 398–418 (LCYL…IFLS), 423–443 (FLFF…AYAI), 468–488 (VYET…LLSP), 507–527 (FDLG…GGLA), and 547–567 (LLNS…IAVG). Residues 572–647 (QKRNSHRIPA…PARIIRAGNG (76 aa)) enclose the PilZ domain. Disordered regions lie at residues 711-734 (SSPT…RKER) and 768-813 (APAH…QPLA). Residues 742 to 1550 (MVSLLALLTF…KQLEDERRKS (809 aa)) are cyclic di-GMP binding domain. A compositionally biased stretch (low complexity) spans 768 to 796 (APAHQPEASDLPPLPALLPATSGAAQAGA). Residues 1513 to 1533 (VLLVGLLGCILIVSVLARALA) traverse the membrane as a helical segment.

This sequence in the N-terminal section; belongs to the glycosyltransferase 2 family. The protein in the C-terminal section; belongs to the AcsB/BcsB family. Mg(2+) serves as cofactor.

It localises to the cell inner membrane. It catalyses the reaction [(1-&gt;4)-beta-D-glucosyl](n) + UDP-alpha-D-glucose = [(1-&gt;4)-beta-D-glucosyl](n+1) + UDP + H(+). Its pathway is glycan metabolism; bacterial cellulose biosynthesis. Its activity is regulated as follows. Activated by c-di-GMP. Its function is as follows. Bifunctional protein comprised of a catalytic subunit and a regulatory subunit. The catalytic subunit of cellulose synthase polymerizes uridine 5'-diphosphate glucose to cellulose in a processive way. The thick cellulosic mats generated by this enzyme probably provide a specialized protective environment to the bacterium. The regulatory subunit binds bis-(3'-5') cyclic diguanylic acid (c-di-GMP). The polypeptide is Cellulose synthase 1 (acsAB) (Komagataeibacter xylinus (Gluconacetobacter xylinus)).